The chain runs to 133 residues: Large ribosomal subunit protein bL12 (133 aa).

It belongs to the bacterial ribosomal protein bL12 family. In terms of assembly, homodimer. Part of the ribosomal stalk of the 50S ribosomal subunit. Forms a multimeric L10(L12)X complex, where L10 forms an elongated spine to which 2 to 4 L12 dimers bind in a sequential fashion. Binds GTP-bound translation factors.

Its function is as follows. Forms part of the ribosomal stalk which helps the ribosome interact with GTP-bound translation factors. Is thus essential for accurate translation. The chain is Large ribosomal subunit protein bL12 from Trichodesmium erythraeum (strain IMS101).